Here is a 237-residue protein sequence, read N- to C-terminus: Methylosome subunit pICln (237 aa).

Residue S2 is modified to N-acetylserine. Phosphoserine occurs at positions 102, 144, 193, and 195. Residue T223 is modified to Phosphothreonine.

The protein belongs to the pICln (TC 1.A.47) family. Component of the methylosome, a 20S complex containing at least PRMT5/SKB1, WDR77/MEP50 and CLNS1A/pICln. May mediate SNRPD1 and SNRPD3 methylation. Forms a 6S pICln-Sm complex composed of CLNS1A/pICln, SNRPD1, SNRPD2, SNRPE, SNRPF and SNRPG; ring-like structure where CLNS1A/pICln mimics additional Sm proteins and which is unable to assemble into the core snRNP. Interacts with LSM10 and LSM11.

The protein resides in the cytoplasm. The protein localises to the cytosol. Its subcellular location is the nucleus. It localises to the cytoskeleton. In terms of biological role, involved in both the assembly of spliceosomal snRNPs and the methylation of Sm proteins. Chaperone that regulates the assembly of spliceosomal U1, U2, U4 and U5 small nuclear ribonucleoproteins (snRNPs), the building blocks of the spliceosome, and thereby plays an important role in the splicing of cellular pre-mRNAs. Most spliceosomal snRNPs contain a common set of Sm proteins SNRPB, SNRPD1, SNRPD2, SNRPD3, SNRPE, SNRPF and SNRPG that assemble in a heptameric protein ring on the Sm site of the small nuclear RNA to form the core snRNP (Sm core). In the cytosol, the Sm proteins SNRPD1, SNRPD2, SNRPE, SNRPF and SNRPG are trapped in an inactive 6S pICln-Sm complex by the chaperone CLNS1A that controls the assembly of the core snRNP. Dissociation by the SMN complex of CLNS1A from the trapped Sm proteins and their transfer to an SMN-Sm complex triggers the assembly of core snRNPs and their transport to the nucleus. The polypeptide is Methylosome subunit pICln (CLNS1A) (Pongo abelii (Sumatran orangutan)).